We begin with the raw amino-acid sequence, 262 residues long: 5'-nucleotidase SurE (262 aa).

The a divalent metal cation site is built by Asp8, Asp9, Ser39, and Asn91.

The protein belongs to the SurE nucleotidase family. Requires a divalent metal cation as cofactor.

The protein localises to the cytoplasm. It catalyses the reaction a ribonucleoside 5'-phosphate + H2O = a ribonucleoside + phosphate. Its function is as follows. Nucleotidase that shows phosphatase activity on nucleoside 5'-monophosphates. In Geobacter sulfurreducens (strain ATCC 51573 / DSM 12127 / PCA), this protein is 5'-nucleotidase SurE.